Here is a 364-residue protein sequence, read N- to C-terminus: Probable dual-specificity RNA methyltransferase RlmN (364 aa).

The Proton acceptor role is filled by Glu107. In terms of domain architecture, Radical SAM core spans 113–346; it reads HEYGNSVCVT…ATIRREQGSD (234 aa). Cys120 and Cys351 are disulfide-bonded. [4Fe-4S] cluster contacts are provided by Cys127, Cys131, and Cys134. Residues 177–178, Ser209, 232–234, and Asn308 contribute to the S-adenosyl-L-methionine site; these read GE and SLH. The active-site S-methylcysteine intermediate is the Cys351.

This sequence belongs to the radical SAM superfamily. RlmN family. It depends on [4Fe-4S] cluster as a cofactor.

The protein resides in the cytoplasm. The catalysed reaction is adenosine(2503) in 23S rRNA + 2 reduced [2Fe-2S]-[ferredoxin] + 2 S-adenosyl-L-methionine = 2-methyladenosine(2503) in 23S rRNA + 5'-deoxyadenosine + L-methionine + 2 oxidized [2Fe-2S]-[ferredoxin] + S-adenosyl-L-homocysteine. It carries out the reaction adenosine(37) in tRNA + 2 reduced [2Fe-2S]-[ferredoxin] + 2 S-adenosyl-L-methionine = 2-methyladenosine(37) in tRNA + 5'-deoxyadenosine + L-methionine + 2 oxidized [2Fe-2S]-[ferredoxin] + S-adenosyl-L-homocysteine. Its function is as follows. Specifically methylates position 2 of adenine 2503 in 23S rRNA and position 2 of adenine 37 in tRNAs. Confers resistance to some classes of antibiotics. This is Probable dual-specificity RNA methyltransferase RlmN from Staphylococcus carnosus (strain TM300).